Consider the following 251-residue polypeptide: MNEAVKTLDGWFCLHDFRSIDWAAWRELNPGNQELMLNELSHFLSDMEITKNIGEGEHTIYSILGQKADLVFFTLRDSLEALNEVENRFNKLAIADYLLPTYSYISVVELSNYLASHMAGGEDPYQNKGVRARLYPALPPKKHICFYPMSKKRDGADNWYMLPMEERQQLIRDHGLIGRSYAGKVQQIIGGSIGFDDYEWGVTLFSDDALEFKRIVTEMRFDEASARYAEFGSFFIGNLLPSEQLSKLFTI.

Residues Arg133, 147-151 (YPMSK), His174, Gln187, and Ser225 each bind Fe-coproporphyrin III. Tyr147 is a catalytic residue.

It belongs to the ChdC family. Type 1 subfamily. Requires Fe-coproporphyrin III as cofactor.

The catalysed reaction is Fe-coproporphyrin III + 2 H2O2 + 2 H(+) = heme b + 2 CO2 + 4 H2O. It catalyses the reaction Fe-coproporphyrin III + H2O2 + H(+) = harderoheme III + CO2 + 2 H2O. The enzyme catalyses harderoheme III + H2O2 + H(+) = heme b + CO2 + 2 H2O. It participates in porphyrin-containing compound metabolism; protoheme biosynthesis. In terms of biological role, involved in coproporphyrin-dependent heme b biosynthesis. Catalyzes the decarboxylation of Fe-coproporphyrin III (coproheme) to heme b (protoheme IX), the last step of the pathway. The reaction occurs in a stepwise manner with a three-propionate intermediate. This is Coproheme decarboxylase from Listeria monocytogenes serotype 4b (strain CLIP80459).